Consider the following 286-residue polypeptide: 4-diphosphocytidyl-2-C-methyl-D-erythritol kinase (286 aa).

Lysine 11 is a catalytic residue. 93 to 103 (PFGAGLGGGSS) provides a ligand contact to ATP. The active site involves aspartate 135.

Belongs to the GHMP kinase family. IspE subfamily.

It carries out the reaction 4-CDP-2-C-methyl-D-erythritol + ATP = 4-CDP-2-C-methyl-D-erythritol 2-phosphate + ADP + H(+). It functions in the pathway isoprenoid biosynthesis; isopentenyl diphosphate biosynthesis via DXP pathway; isopentenyl diphosphate from 1-deoxy-D-xylulose 5-phosphate: step 3/6. Functionally, catalyzes the phosphorylation of the position 2 hydroxy group of 4-diphosphocytidyl-2C-methyl-D-erythritol. In Chlorobaculum tepidum (strain ATCC 49652 / DSM 12025 / NBRC 103806 / TLS) (Chlorobium tepidum), this protein is 4-diphosphocytidyl-2-C-methyl-D-erythritol kinase.